A 184-amino-acid chain; its full sequence is Lactoylglutathione lyase (184 aa).

Residue Ala2 is modified to N-acetylalanine. Cysteines 19 and 20 form a disulfide. In terms of domain architecture, VOC spans 31–177; the sequence is LLQQTMLRIK…DGYWIEILNP (147 aa). Residues Gln34 and Arg38 each coordinate substrate. Zn(2+) is bound at residue Gln34. Residue Glu100 participates in Zn(2+) binding. Residue Asn104 participates in substrate binding. Thr107 is modified (phosphothreonine). Residues Arg123 and His127 each coordinate substrate. His127 provides a ligand contact to Zn(2+). The residue at position 139 (Cys139) is an S-glutathionyl cysteine. The residue at position 148 (Lys148) is an N6-acetyllysine; alternate. At Lys148 the chain carries N6-succinyllysine; alternate. 157–158 contributes to the substrate binding site; that stretch reads KM. Residue Glu173 participates in Zn(2+) binding. Residue Glu173 is the Proton donor/acceptor of the active site.

This sequence belongs to the glyoxalase I family. In terms of assembly, homodimer. It depends on Zn(2+) as a cofactor. Post-translationally, glutathionylation at Cys-139 inhibits enzyme activity. In terms of processing, phosphorylated at Thr-107 in the presence of CaMK2. However, this is a consensus site for phosphorylation by CK2 so phosphorylation may be mediated by CK2 rather than CaMK2. Phosphorylation is induced by TNF and suppresses the TNF-induced transcriptional activity of NF-kappa-B. Exists in a nitric oxide (NO)-modified form. The exact nature of the modification is unknown, but it suppresses the TNF-induced transcriptional activity of NF-kappa-B.

It carries out the reaction (R)-S-lactoylglutathione = methylglyoxal + glutathione. The protein operates within secondary metabolite metabolism; methylglyoxal degradation; (R)-lactate from methylglyoxal: step 1/2. In terms of biological role, catalyzes the conversion of hemimercaptal, formed from methylglyoxal and glutathione, to S-lactoylglutathione. Involved in the regulation of TNF-induced transcriptional activity of NF-kappa-B. Required for normal osteoclastogenesis. This chain is Lactoylglutathione lyase (Glo1), found in Rattus norvegicus (Rat).